A 346-amino-acid chain; its full sequence is Biotin synthase (346 aa).

A Radical SAM core domain is found at 38–256; it reads RQVQVSTLLS…IAVARIMMPT (219 aa). Positions 53, 57, and 60 each coordinate [4Fe-4S] cluster. [2Fe-2S] cluster-binding residues include C97, C128, C188, and R260.

This sequence belongs to the radical SAM superfamily. Biotin synthase family. In terms of assembly, homodimer. [4Fe-4S] cluster is required as a cofactor. The cofactor is [2Fe-2S] cluster.

The enzyme catalyses (4R,5S)-dethiobiotin + (sulfur carrier)-SH + 2 reduced [2Fe-2S]-[ferredoxin] + 2 S-adenosyl-L-methionine = (sulfur carrier)-H + biotin + 2 5'-deoxyadenosine + 2 L-methionine + 2 oxidized [2Fe-2S]-[ferredoxin]. The protein operates within cofactor biosynthesis; biotin biosynthesis; biotin from 7,8-diaminononanoate: step 2/2. In terms of biological role, catalyzes the conversion of dethiobiotin (DTB) to biotin by the insertion of a sulfur atom into dethiobiotin via a radical-based mechanism. This chain is Biotin synthase, found in Pseudescherichia vulneris (Escherichia vulneris).